Consider the following 212-residue polypeptide: Thymidylate kinase (212 aa).

An ATP-binding site is contributed by 10-17 (GPDGAGKS).

This sequence belongs to the thymidylate kinase family.

The catalysed reaction is dTMP + ATP = dTDP + ADP. Functionally, phosphorylation of dTMP to form dTDP in both de novo and salvage pathways of dTTP synthesis. This Lactobacillus helveticus (strain DPC 4571) protein is Thymidylate kinase.